The chain runs to 126 residues: Hydrogenase maturation factor HypA (126 aa).

His2 lines the Ni(2+) pocket. The Zn(2+) site is built by Cys78, Cys81, Cys97, and Cys100.

Belongs to the HypA/HybF family.

In terms of biological role, involved in the maturation of [NiFe] hydrogenases. Required for nickel insertion into the metal center of the hydrogenase. The protein is Hydrogenase maturation factor HypA of Methanococcus maripaludis (strain DSM 14266 / JCM 13030 / NBRC 101832 / S2 / LL).